The following is a 62-amino-acid chain: Pelophylaxin-4 (62 aa).

The first 22 residues, 1–22 (MLTLKKSMLLIFFLGTINFSLC), serve as a signal peptide directing secretion. A propeptide spanning residues 23–45 (EQERNADEEERRDEPEERDVEVQ) is cleaved from the precursor. Leucine 60 bears the Leucine amide mark. Residue glycine 61 is a propeptide.

In terms of tissue distribution, expressed by the skin glands.

Its subcellular location is the secreted. Its function is as follows. Antimicrobial peptide. This Pelophylax fukienensis (Fukien gold-striped pond frog) protein is Pelophylaxin-4.